Consider the following 304-residue polypeptide: Recombination-associated protein RdgC (304 aa).

The protein belongs to the RdgC family.

Its subcellular location is the cytoplasm. It localises to the nucleoid. In terms of biological role, may be involved in recombination. The protein is Recombination-associated protein RdgC of Shewanella putrefaciens (strain CN-32 / ATCC BAA-453).